The following is a 358-amino-acid chain: Photosystem II protein D1 1 (358 aa).

Helical transmembrane passes span 28–45 (YVGW…AATI), 117–132 (HFLI…QWEL), and 141–155 (WICV…AAFA). Residue His117 coordinates chlorophyll a. Tyr125 serves as a coordination point for pheophytin a. Residues Asp169 and Glu188 each coordinate [CaMn4O5] cluster. The chain crosses the membrane as a helical span at residues 196-217 (FHMLGVAGVFGGSLFSAMHGSL). Residue His197 participates in chlorophyll a binding. A quinone contacts are provided by residues His214 and 263-264 (SF). His214 serves as a coordination point for Fe cation. His271 contributes to the Fe cation binding site. Residues 273–287 (FLGAWPVIGIWFTSM) form a helical membrane-spanning segment. His331, Glu332, Asp341, and Ala343 together coordinate [CaMn4O5] cluster. A propeptide spanning residues 344 to 358 (AAESTPVALQAPAIG) is cleaved from the precursor.

This sequence belongs to the reaction center PufL/M/PsbA/D family. PSII is composed of 1 copy each of membrane proteins PsbA, PsbB, PsbC, PsbD, PsbE, PsbF, PsbH, PsbI, PsbJ, PsbK, PsbL, PsbM, PsbT, PsbX, PsbY, PsbZ, Psb30/Ycf12, peripheral proteins PsbO, CyanoQ (PsbQ), PsbU, PsbV and a large number of cofactors. It forms dimeric complexes. Requires The D1/D2 heterodimer binds P680, chlorophylls that are the primary electron donor of PSII, and subsequent electron acceptors. It shares a non-heme iron and each subunit binds pheophytin, quinone, additional chlorophylls, carotenoids and lipids. D1 provides most of the ligands for the Mn4-Ca-O5 cluster of the oxygen-evolving complex (OEC). There is also a Cl(-1) ion associated with D1 and D2, which is required for oxygen evolution. The PSII complex binds additional chlorophylls, carotenoids and specific lipids. as cofactor. In terms of processing, tyr-160 forms a radical intermediate that is referred to as redox-active TyrZ, YZ or Y-Z. C-terminally processed by CtpA; processing is essential to allow assembly of the oxygen-evolving complex and thus photosynthetic growth.

The protein resides in the cellular thylakoid membrane. It catalyses the reaction 2 a plastoquinone + 4 hnu + 2 H2O = 2 a plastoquinol + O2. Its function is as follows. Photosystem II (PSII) is a light-driven water:plastoquinone oxidoreductase that uses light energy to abstract electrons from H(2)O, generating O(2) and a proton gradient subsequently used for ATP formation. It consists of a core antenna complex that captures photons, and an electron transfer chain that converts photonic excitation into a charge separation. The D1/D2 (PsbA/PsbD) reaction center heterodimer binds P680, the primary electron donor of PSII as well as several subsequent electron acceptors. The sequence is that of Photosystem II protein D1 1 from Synechococcus sp. (strain CC9902).